The chain runs to 182 residues: Flightin (182 aa).

Residues 1–15 (MADEEDPWGFDDGGE) show a composition bias toward acidic residues. Positions 1-76 (MADEEDPWGF…PPPPEDDGYR (76 aa)) are disordered.

Post-translationally, several forms of flightin are thought to be produced through post-translational modifications, possibly by phosphorylation. Found only in indirect flight muscles (IFM).

In terms of biological role, possibly involved in the regulation of flight muscles contraction, possibly by modulating actin-myosin interaction. This chain is Flightin (fln), found in Drosophila melanogaster (Fruit fly).